A 220-amino-acid polypeptide reads, in one-letter code: GTP cyclohydrolase 1 (220 aa).

Residues Cys-110, His-113, and Cys-181 each contribute to the Zn(2+) site.

The protein belongs to the GTP cyclohydrolase I family. In terms of assembly, toroid-shaped homodecamer, composed of two pentamers of five dimers.

The catalysed reaction is GTP + H2O = 7,8-dihydroneopterin 3'-triphosphate + formate + H(+). It functions in the pathway cofactor biosynthesis; 7,8-dihydroneopterin triphosphate biosynthesis; 7,8-dihydroneopterin triphosphate from GTP: step 1/1. In Baumannia cicadellinicola subsp. Homalodisca coagulata, this protein is GTP cyclohydrolase 1.